The primary structure comprises 155 residues: Interleukin-2 (155 aa).

A signal peptide spans 1–20; it reads MYRMQLLSCIALTLALVANG. O-linked (GalNAc...) threonine glycosylation occurs at Thr23. Cys79 and Cys127 form a disulfide bridge.

It belongs to the IL-2 family.

It is found in the secreted. In terms of biological role, cytokine produced by activated CD4-positive helper T-cells and to a lesser extend activated CD8-positive T-cells and natural killer (NK) cells that plays pivotal roles in the immune response and tolerance. Binds to a receptor complex composed of either the high-affinity trimeric IL-2R (IL2RA/CD25, IL2RB/CD122 and IL2RG/CD132) or the low-affinity dimeric IL-2R (IL2RB and IL2RG). Interaction with the receptor leads to oligomerization and conformation changes in the IL-2R subunits resulting in downstream signaling starting with phosphorylation of JAK1 and JAK3. In turn, JAK1 and JAK3 phosphorylate the receptor to form a docking site leading to the phosphorylation of several substrates including STAT5. This process leads to activation of several pathways including STAT, phosphoinositide-3-kinase/PI3K and mitogen-activated protein kinase/MAPK pathways. Functions as a T-cell growth factor and can increase NK-cell cytolytic activity as well. Promotes strong proliferation of activated B-cells and subsequently immunoglobulin production. Plays a pivotal role in regulating the adaptive immune system by controlling the survival and proliferation of regulatory T-cells, which are required for the maintenance of immune tolerance. Moreover, participates in the differentiation and homeostasis of effector T-cell subsets, including Th1, Th2, Th17 as well as memory CD8-positive T-cells. The protein is Interleukin-2 (IL2) of Capra hircus (Goat).